The following is a 331-amino-acid chain: ESX-3 secretion system protein EccE3 (331 aa).

Transmembrane regions (helical) follow at residues 11–31 (GRVTLVLLAVVPVALAYPWQS) and 37–57 (LLGVAAAVVIGLFGFWRGLYF).

Belongs to the EccE family. As to quaternary structure, part of the ESX-3 / type VII secretion system (T7SS), which is composed of cytosolic and membrane components. The ESX-3 membrane complex is composed of EccB3, EccC3, EccD3 and EccE3.

It localises to the cell inner membrane. In terms of biological role, part of the ESX-3 specialized secretion system, which is important for iron and zinc uptake or homeostasis. This chain is ESX-3 secretion system protein EccE3, found in Mycobacterium tuberculosis (strain ATCC 25618 / H37Rv).